Reading from the N-terminus, the 148-residue chain is Protein H2A.6 (148 aa).

The segment at 120-148 (GAAEKESTKSPKKKAATKSPKKKTAATKE) is disordered. Short sequence motifs (SPKK motif) lie at residues 129 to 132 (SPKK) and 138 to 141 (SPKK). Over residues 129-148 (SPKKKAATKSPKKKTAATKE) the composition is skewed to basic residues.

Belongs to the histone H2A family. As to quaternary structure, the nucleosome is a histone octamer containing two molecules each of H2A, H2B, H3 and H4 assembled in one H3-H4 heterotetramer and two H2A-H2B heterodimers. The octamer wraps approximately 147 bp of DNA. As to expression, abundant in meristematic tissues.

It localises to the nucleus. Its subcellular location is the chromosome. Its function is as follows. Core component of nucleosome. Nucleosomes wrap and compact DNA into chromatin, limiting DNA accessibility to the cellular machineries which require DNA as a template. Histones thereby play a central role in transcription regulation, DNA repair, DNA replication and chromosomal stability. DNA accessibility is regulated via a complex set of post-translational modifications of histones, also called histone code, and nucleosome remodeling. In Triticum aestivum (Wheat), this protein is Protein H2A.6 (H2A-3).